A 255-amino-acid polypeptide reads, in one-letter code: Mediator of RNA polymerase II transcription subunit 18 (255 aa).

This sequence belongs to the Mediator complex subunit 18 family. Component of the Mediator complex.

It is found in the nucleus. Functionally, component of the Mediator complex, a coactivator involved in the regulated transcription of nearly all RNA polymerase II-dependent genes. Mediator functions as a bridge to convey information from gene-specific regulatory proteins to the basal RNA polymerase II transcription machinery. Mediator is recruited to promoters by direct interactions with regulatory proteins and serves as a scaffold for the assembly of a functional preinitiation complex with RNA polymerase II and the general transcription factors. The sequence is that of Mediator of RNA polymerase II transcription subunit 18 (SRB5) from Kluyveromyces lactis (strain ATCC 8585 / CBS 2359 / DSM 70799 / NBRC 1267 / NRRL Y-1140 / WM37) (Yeast).